A 260-amino-acid chain; its full sequence is 3'-5' ssDNA/RNA exonuclease TatD (260 aa).

A divalent metal cation-binding residues include Glu-91, His-127, and His-152.

It belongs to the metallo-dependent hydrolases superfamily. TatD-type hydrolase family. TatD subfamily. Monomer. Requires Mg(2+) as cofactor.

It localises to the cytoplasm. Its function is as follows. 3'-5' exonuclease that prefers single-stranded DNA and RNA. May play a role in the H(2)O(2)-induced DNA damage repair. The chain is 3'-5' ssDNA/RNA exonuclease TatD from Shigella flexneri serotype 5b (strain 8401).